The chain runs to 116 residues: HTH-type transcriptional regulator AnsR (116 aa).

The 55-residue stretch at 6–60 folds into the HTH cro/C1-type domain; the sequence is LTELRKKKNWSLQYTADLLGIAKSTYAGYESGYRRPSLEALAMLADLFDTTCDEL. The segment at residues 17-36 is a DNA-binding region (H-T-H motif); sequence LQYTADLLGIAKSTYAGYES.

Its function is as follows. Transcriptional repressor for the ans operon coding for L-asparaginase and L-aspartase. NH4(+) may influence this repression. This Bacillus subtilis (strain 168) protein is HTH-type transcriptional regulator AnsR (ansR).